Consider the following 96-residue polypeptide: Putative pterin-4-alpha-carbinolamine dehydratase (96 aa).

This sequence belongs to the pterin-4-alpha-carbinolamine dehydratase family.

It carries out the reaction (4aS,6R)-4a-hydroxy-L-erythro-5,6,7,8-tetrahydrobiopterin = (6R)-L-erythro-6,7-dihydrobiopterin + H2O. The polypeptide is Putative pterin-4-alpha-carbinolamine dehydratase (Caulobacter sp. (strain K31)).